A 295-amino-acid chain; its full sequence is Defective in cullin neddylation protein 1 (295 aa).

One can recognise a UBA-like domain in the interval 8–45; the sequence is QKTKLRQFVQWTQVTEAVSLNFLAKANWNIEYAMTLYF. The DCUN1 domain occupies 60–272; that stretch reads VDRSNIERLF…LIDQFVDYCR (213 aa).

As to quaternary structure, interacts with the cullin cul-3. Interacts with ubiquitin via its UBA-like domain. Interacts with ned-8/nedd8.

It localises to the nucleus. Its function is as follows. Required for neddylation of cullin components of SCF-type E3 ubiquitin ligase complexes. Neddylation of cullins play an essential role in the regulation of SCF-type complexes activity. Does not act by preventing deneddylation, but rather facilitates neddylation, possibly by acting with rbx-1 to recruit the Nedd8-charged E2 enzyme to the cullin component of SCF-type complexes. This is Defective in cullin neddylation protein 1 (dcn-1) from Caenorhabditis elegans.